A 1345-amino-acid polypeptide reads, in one-letter code: DNA-directed RNA polymerase subunit beta' (1345 aa).

Residues Cys60, Cys62, Cys75, and Cys78 each coordinate Zn(2+). Positions 536, 538, and 540 each coordinate Mg(2+). Zn(2+)-binding residues include Cys895, Cys974, Cys981, and Cys984. The disordered stretch occupies residues 1325–1345 (DDNDNPVDFGDEFRIDPDELK). Basic and acidic residues predominate over residues 1335–1345 (DEFRIDPDELK).

Belongs to the RNA polymerase beta' chain family. As to quaternary structure, the RNAP catalytic core consists of 2 alpha, 1 beta, 1 beta' and 1 omega subunit. When a sigma factor is associated with the core the holoenzyme is formed, which can initiate transcription. It depends on Mg(2+) as a cofactor. The cofactor is Zn(2+).

The catalysed reaction is RNA(n) + a ribonucleoside 5'-triphosphate = RNA(n+1) + diphosphate. DNA-dependent RNA polymerase catalyzes the transcription of DNA into RNA using the four ribonucleoside triphosphates as substrates. This chain is DNA-directed RNA polymerase subunit beta', found in Bifidobacterium animalis subsp. lactis (strain AD011).